Here is a 323-residue protein sequence, read N- to C-terminus: Beta-ketoacyl-[acyl-carrier-protein] synthase III (323 aa).

Residues Cys114 and His250 contribute to the active site. The interval 251–255 is ACP-binding; sequence QANLR. Asn280 is an active-site residue.

Belongs to the thiolase-like superfamily. FabH family. Homodimer.

It is found in the cytoplasm. The catalysed reaction is malonyl-[ACP] + acetyl-CoA + H(+) = 3-oxobutanoyl-[ACP] + CO2 + CoA. It functions in the pathway lipid metabolism; fatty acid biosynthesis. In terms of biological role, catalyzes the condensation reaction of fatty acid synthesis by the addition to an acyl acceptor of two carbons from malonyl-ACP. Catalyzes the first condensation reaction which initiates fatty acid synthesis and may therefore play a role in governing the total rate of fatty acid production. Possesses both acetoacetyl-ACP synthase and acetyl transacylase activities. Its substrate specificity determines the biosynthesis of branched-chain and/or straight-chain of fatty acids. This chain is Beta-ketoacyl-[acyl-carrier-protein] synthase III, found in Cereibacter sphaeroides (strain ATCC 17025 / ATH 2.4.3) (Rhodobacter sphaeroides).